We begin with the raw amino-acid sequence, 131 residues long: MVTLYTSPSCTSCRKARAWLEEHEIPFVERNIFSEPLSIDEIKQILRMTEDGTDEIISTRSKVFQKLNVNVESMPLQDLYRLINEHPGLLRRPIIIDEKRLQVGYNEDEIRRFLPRKVRSFQLREAQRLAN.

The CXXC motif lies at 10–13; that stretch reads CTSC. An intrachain disulfide couples Cys-10 to Cys-13.

The protein belongs to the ArsC family. Spx subfamily. Interacts with the C-terminal domain of the alpha subunit of the RNAP. A single Spx monomer interacts with RNAP to form the transcription activation complex. Interacts with the adapter protein SpxH/YjbH.

It localises to the cytoplasm. Under non-stress conditions, Spx is degraded by ClpXP and, to a lesser extent, by ClpCP. Efficient dedradation by ClpXP requires the adapter protein SpxH/YjbH. Binding to SpxH/YjbH reduces the overall conformational flexibility of Spx and stabilizes the C-terminal ClpX recognition region of Spx. In addition, activity is modulated by the formation of a disulfide bound within the N-terminal Cys-X-X-Cys (CXXC) motif, which is required for the transcriptional activation of trxA and trxB, or for the activation of msrAB operon expression following paraquat oxidative stress. However, it seems that formation of the disulfide bound is not essential for induction of all Spx-controlled genes, as for example the case of BSH biosynthesis genes. Similarly, induction of the Spx regulon during cell wall stress is not accompanied by oxidation of the disulfide switch, but requires Spx stabilization by the anti-adapter protein SpxO/YirB. In terms of biological role, global transcriptional regulator that plays a key role in stress response and exerts either positive or negative regulation of genes. Acts by interacting with the C-terminal domain of the alpha subunit of the RNA polymerase (RNAP). This interaction can enhance binding of RNAP to the promoter region of target genes and stimulate their transcription, or block interaction of RNAP with activator proteins and repress transcription. Exhibits no DNA-binding activity. Induces the expression of a large number of genes in response to a variety of stress conditions, such as disulfide, heat and cell wall stress, while concurrently repressing transcription of genes involved in various developmental and growth-related pathways during periods of extreme stress. Functions in the oxidative stress response via induction of the transcription of thioredoxin (trxA) and thioredoxin reductase (trxB) during thiol-specific oxidative (disulfide) stress. Mediates response to oxidative stress caused by paraquat (PQ) via induction of the methionine sulfoxide reductase genes, msrA and msrB. Also acts as a transcriptional activator of the bacillithiol (BSH) biosynthesis genes in response to oxidizing conditions and thio-reactive compounds. Involved in heat stress response and thermotolerance development, which results in diminished cellular protein aggregates. Plays an important adaptive role in the cell wall stress response. Participates in sulfate-dependent control of organosulfur metabolism. Negatively controls, via CymR, the expression of the organosulfur utilization operons ytmI, yxeI and ssu, and directly activates yrrT operon expression during growth in medium containing methionine as sole sulfur source. Negatively affects competence and sporulation. Inhibits biofilm formation in response to disulfide stress by repressing biofilm matrix genes. The protein is Global transcriptional regulator Spx of Bacillus subtilis (strain 168).